We begin with the raw amino-acid sequence, 1178 residues long: Ubiquitin carboxyl-terminal hydrolase cyk-3 (1178 aa).

3 consecutive EF-hand domains span residues 28-60 (EEYR…GAQI), 175-210 (FPDS…LCRG), and 211-246 (PLPG…LNVP). Ca(2+) contacts are provided by Asp188, Asn190, Asp192, Gln194, Glu199, Asp224, Asp226, Asp228, and Glu235. The DUSP domain occupies 296–410 (ESRKMELQIV…VDSQFTRKYL (115 aa)). The 606-residue stretch at 570–1175 (VGLVNYGNFC…GAYLLFYERK (606 aa)) folds into the USP domain. Cys579 (nucleophile) is an active-site residue. Positions 681-725 (SNKSLHPSPEESEGTDSNKLSDSSKKKEADKEEADEEKAERSWTE) are disordered. The Proton acceptor role is filled by His1134.

The protein belongs to the peptidase C19 family. Expressed in excretory cells, coelomocytes, head neurons, hypodermal cells, germ cells, oocytes, sperm and pharynx (at protein level).

The protein localises to the nucleus. Its subcellular location is the cytoplasm. It is found in the cytoskeleton. It localises to the microtubule organizing center. It catalyses the reaction Thiol-dependent hydrolysis of ester, thioester, amide, peptide and isopeptide bonds formed by the C-terminal Gly of ubiquitin (a 76-residue protein attached to proteins as an intracellular targeting signal).. In terms of biological role, ubiquitin-protein hydrolase which cleaves ubiquitin from ubiquitinated proteins. Plays a role in embryo osmoregulation. Probably by regulating osmosis, controls actin redistribution in the 1-cell embryos and thus actin-dependent processes such as cytokinesis and P-granules segregation. During the first embryonic mitotic division, involved in the formation of a functional microtubule organizing center provided by the male pronucleus. Acts as a positive regulator of the mTORC1 signaling. This Caenorhabditis elegans protein is Ubiquitin carboxyl-terminal hydrolase cyk-3.